The chain runs to 185 residues: Large ribosomal subunit protein uL6m (185 aa).

This sequence belongs to the universal ribosomal protein uL6 family.

Its subcellular location is the mitochondrion. The protein is Large ribosomal subunit protein uL6m (RPL6) of Reclinomonas americana.